We begin with the raw amino-acid sequence, 384 residues long: Lipid-A-disaccharide synthase (384 aa).

This sequence belongs to the LpxB family.

The enzyme catalyses a lipid X + a UDP-2-N,3-O-bis[(3R)-3-hydroxyacyl]-alpha-D-glucosamine = a lipid A disaccharide + UDP + H(+). Its pathway is bacterial outer membrane biogenesis; LPS lipid A biosynthesis. Functionally, condensation of UDP-2,3-diacylglucosamine and 2,3-diacylglucosamine-1-phosphate to form lipid A disaccharide, a precursor of lipid A, a phosphorylated glycolipid that anchors the lipopolysaccharide to the outer membrane of the cell. The protein is Lipid-A-disaccharide synthase of Neisseria meningitidis serogroup C / serotype 2a (strain ATCC 700532 / DSM 15464 / FAM18).